The following is a 331-amino-acid chain: Ketol-acid reductoisomerase (NADP(+)) (331 aa).

The region spanning 2 to 182 (ARMYYDEDAN…GGTRGGVLET (181 aa)) is the KARI N-terminal Rossmann domain. NADP(+) is bound by residues 25-28 (YGSQ), Ser-51, Ser-53, and 83-86 (DEVQ). The active site involves His-108. Gly-134 lines the NADP(+) pocket. The 146-residue stretch at 183-328 (TFREETETDL…KDLRAMFSWL (146 aa)) folds into the KARI C-terminal knotted domain. Mg(2+) contacts are provided by Asp-191, Glu-195, Glu-227, and Glu-231. Ser-252 serves as a coordination point for substrate.

Belongs to the ketol-acid reductoisomerase family. The cofactor is Mg(2+).

The enzyme catalyses (2R)-2,3-dihydroxy-3-methylbutanoate + NADP(+) = (2S)-2-acetolactate + NADPH + H(+). It carries out the reaction (2R,3R)-2,3-dihydroxy-3-methylpentanoate + NADP(+) = (S)-2-ethyl-2-hydroxy-3-oxobutanoate + NADPH + H(+). The protein operates within amino-acid biosynthesis; L-isoleucine biosynthesis; L-isoleucine from 2-oxobutanoate: step 2/4. It functions in the pathway amino-acid biosynthesis; L-valine biosynthesis; L-valine from pyruvate: step 2/4. Its function is as follows. Involved in the biosynthesis of branched-chain amino acids (BCAA). Catalyzes an alkyl-migration followed by a ketol-acid reduction of (S)-2-acetolactate (S2AL) to yield (R)-2,3-dihydroxy-isovalerate. In the isomerase reaction, S2AL is rearranged via a Mg-dependent methyl migration to produce 3-hydroxy-3-methyl-2-ketobutyrate (HMKB). In the reductase reaction, this 2-ketoacid undergoes a metal-dependent reduction by NADPH to yield (R)-2,3-dihydroxy-isovalerate. This chain is Ketol-acid reductoisomerase (NADP(+)), found in Trichormus variabilis (strain ATCC 29413 / PCC 7937) (Anabaena variabilis).